Here is a 136-residue protein sequence, read N- to C-terminus: Small ribosomal subunit protein bS16 (136 aa).

It belongs to the bacterial ribosomal protein bS16 family.

The chain is Small ribosomal subunit protein bS16 from Pseudarthrobacter chlorophenolicus (strain ATCC 700700 / DSM 12829 / CIP 107037 / JCM 12360 / KCTC 9906 / NCIMB 13794 / A6) (Arthrobacter chlorophenolicus).